A 209-amino-acid chain; its full sequence is Ribosomal RNA large subunit methyltransferase E (209 aa).

S-adenosyl-L-methionine is bound by residues glycine 63, tryptophan 65, aspartate 83, aspartate 99, and aspartate 124. Lysine 164 functions as the Proton acceptor in the catalytic mechanism.

The protein belongs to the class I-like SAM-binding methyltransferase superfamily. RNA methyltransferase RlmE family.

The protein localises to the cytoplasm. It carries out the reaction uridine(2552) in 23S rRNA + S-adenosyl-L-methionine = 2'-O-methyluridine(2552) in 23S rRNA + S-adenosyl-L-homocysteine + H(+). Functionally, specifically methylates the uridine in position 2552 of 23S rRNA at the 2'-O position of the ribose in the fully assembled 50S ribosomal subunit. This is Ribosomal RNA large subunit methyltransferase E from Aliivibrio fischeri (strain MJ11) (Vibrio fischeri).